The sequence spans 435 residues: MSHVHQAGEAFASNAAESRQEIRNYTMNFGPQHPAAHGVLRLILEMDGETIMRADPHVGLLHRGTEKLAESKPFNQSIGYMDRLDYVSMMCNEHAYVRAIETLMGIEAPERAQYIRTMYDEITRILNHLMWLGSNALDLGAMAVMLYAFREREELMDCYEAVSGARMHAAYYRPGGVYRDLPDHMPKYKESRWHKGKALKQLNASREGSLLDFLENFTVEFPKRIDEYETLLTDNRIWKQRTVGIGVVTPELAHQWGMTGVMLRGSGVAWDLRKKRPYAKYDAVDFDIPLGKEGDCYDRYLVRVAEMRESNRIIKQCVAWLKANPGPVMVKNFKVAPPRREDMKDDMEALIHHFKLFSEGYCVPAGETYSAVEAPKGEFGCYLVSDGANKPFRVHLRAPGFAHLSSIDSIVRGHMLADVVAMIGTYDLVFGEVDR.

It belongs to the complex I 49 kDa subunit family. As to quaternary structure, NDH-1 is composed of 14 different subunits. Subunits NuoB, C, D, E, F, and G constitute the peripheral sector of the complex.

It localises to the cell membrane. It carries out the reaction a quinone + NADH + 5 H(+)(in) = a quinol + NAD(+) + 4 H(+)(out). Its function is as follows. NDH-1 shuttles electrons from NADH, via FMN and iron-sulfur (Fe-S) centers, to quinones in the respiratory chain. The immediate electron acceptor for the enzyme in this species is believed to be ubiquinone. Couples the redox reaction to proton translocation (for every two electrons transferred, four hydrogen ions are translocated across the cytoplasmic membrane), and thus conserves the redox energy in a proton gradient. This is NADH-quinone oxidoreductase subunit D from Stenotrophomonas maltophilia (strain K279a).